We begin with the raw amino-acid sequence, 362 residues long: Very-long-chain (3R)-3-hydroxyacyl-CoA dehydratase 3 (362 aa).

Residue methionine 1 is modified to N-acetylmethionine. Topologically, residues 1–149 (METQVLTPHV…ETLTNLKKGY (149 aa)) are cytoplasmic. Residues 5–94 (VLTPHVYWAQ…KGSHWWERLT (90 aa)) enclose the CS domain. A Phosphothreonine modification is found at threonine 7. Residues 111 to 138 (LDESDAEMELRAKEEERLNKLRLEREGS) are a coiled coil. Serine 114 is modified (phosphoserine). A helical membrane pass occupies residues 150–170 (LFMYNLVQLLGFSWIFVNLTV). Topologically, residues 171 to 189 (RFFILGKESFYDTFHNVAD) are lumenal. The chain crosses the membrane as a helical span at residues 190–210 (MMYFCQMLALVETLNAAIGVT). The Cytoplasmic segment spans residues 211–212 (ST). Residues 213-233 (PVLPALIQFLGRNFILFLVFG) traverse the membrane as a helical segment. The Lumenal segment spans residues 234–242 (TMEEMQNKA). A helical membrane pass occupies residues 243 to 263 (VVFFVFYSWSAIEIFRYPFYM). Topologically, residues 264–280 (LSCIDMDWKVLTWLRYT) are cytoplasmic. A helical transmembrane segment spans residues 281–301 (MWIPLYPLGCLSEAVAVIQSI). Residues tyrosine 286 and glutamate 293 contribute to the active site. Residues 302–322 (PVFNESGRFSFTLPYPVKMKV) lie on the Lumenal side of the membrane. The chain crosses the membrane as a helical span at residues 323–343 (RFSFFLQVYLVMLFLGLYINF). The Cytoplasmic segment spans residues 344 to 362 (RHLYKQRRRRYGQKKKKLH).

This sequence belongs to the very long-chain fatty acids dehydratase HACD family. In terms of assembly, may interact with enzymes of the ELO family (including ELOVL1); with those enzymes that mediate condensation, the first of the four steps of the reaction cycle responsible for fatty acids elongation, may be part of a larger fatty acids elongase complex. Interacts with RAC1. Associates with internalized insulin receptor/INSR complexes on Golgi/endosomal membranes; HACD3/PTPLAD1 together with ATIC and PRKAA2/AMPK2 is proposed to be part of a signaling network regulating INSR autophosphorylation and endocytosis.

Its subcellular location is the endoplasmic reticulum membrane. The enzyme catalyses a very-long-chain (3R)-3-hydroxyacyl-CoA = a very-long-chain (2E)-enoyl-CoA + H2O. The catalysed reaction is (3R)-hydroxyhexadecanoyl-CoA = (2E)-hexadecenoyl-CoA + H2O. Its pathway is lipid metabolism; fatty acid biosynthesis. In terms of biological role, catalyzes the third of the four reactions of the long-chain fatty acids elongation cycle. This endoplasmic reticulum-bound enzymatic process, allows the addition of two carbons to the chain of long- and very long-chain fatty acids/VLCFAs per cycle. This enzyme catalyzes the dehydration of the 3-hydroxyacyl-CoA intermediate into trans-2,3-enoyl-CoA, within each cycle of fatty acid elongation. Thereby, it participates in the production of VLCFAs of different chain lengths that are involved in multiple biological processes as precursors of membrane lipids and lipid mediators. Involved in Rac1-signaling pathways leading to the modulation of gene expression. Promotes insulin receptor/INSR autophosphorylation and is involved in INSR internalization. The sequence is that of Very-long-chain (3R)-3-hydroxyacyl-CoA dehydratase 3 from Mus musculus (Mouse).